Consider the following 188-residue polypeptide: Cell division protein SepF (188 aa).

The segment covering 152 to 162 (TSHDEASTPTV) has biased composition (polar residues). The disordered stretch occupies residues 152–188 (TSHDEASTPTVVSRDAEAEQQQEAAAAPSPAWGATAL).

Belongs to the SepF family. In terms of assembly, homodimer. Interacts with FtsZ.

The protein resides in the cytoplasm. Cell division protein that is part of the divisome complex and is recruited early to the Z-ring. Probably stimulates Z-ring formation, perhaps through the cross-linking of FtsZ protofilaments. Its function overlaps with FtsA. The chain is Cell division protein SepF from Parasynechococcus marenigrum (strain WH8102).